The sequence spans 579 residues: Potassium-transporting ATPase potassium-binding subunit (579 aa).

10 helical membrane passes run 2 to 22, 66 to 86, 135 to 155, 177 to 197, 262 to 282, 292 to 312, 391 to 411, 437 to 457, 490 to 510, and 546 to 566; these read MNLV…AIPL, SFSV…IHIF, GLTV…FALI, VLYI…SQGV, LSNL…CFTF, GIAI…IIGV, VFGG…LAVF, VLVC…ASIL, FAGF…SMLF, and FIGL…FPAL.

The protein belongs to the KdpA family. In terms of assembly, the system is composed of three essential subunits: KdpA, KdpB and KdpC.

The protein localises to the cell membrane. Its function is as follows. Part of the high-affinity ATP-driven potassium transport (or Kdp) system, which catalyzes the hydrolysis of ATP coupled with the electrogenic transport of potassium into the cytoplasm. This subunit binds the extracellular potassium ions and delivers the ions to the membrane domain of KdpB through an intramembrane tunnel. The polypeptide is Potassium-transporting ATPase potassium-binding subunit (Clostridium botulinum (strain Alaska E43 / Type E3)).